Consider the following 1229-residue polypeptide: Putative cell division cycle ATPase (1229 aa).

The span at 252–267 (GKKNNNGNVKKGIKNV) shows a compositional bias: low complexity. The disordered stretch occupies residues 252–315 (GKKNNNGNVK…GGKNNSYYNE (64 aa)). Positions 268 to 281 (PMDEKSYSPNDHDN) are enriched in basic and acidic residues. Over residues 282 to 314 (NSNNSNNNNNNDNNNSNNNNNNNNGGKNNSYYN) the composition is skewed to low complexity. 568–575 (GIPGTGKT) lines the ATP pocket. 2 disordered regions span residues 814–837 (TLLQ…DALD) and 860–892 (FSND…KNER). Composition is skewed to basic and acidic residues over residues 819–837 (DKNE…DALD) and 882–892 (NPNDKLDKNER). An ATP-binding site is contributed by 975–982 (GPPGCGKT).

Belongs to the AAA ATPase family.

In Plasmodium falciparum (isolate 3D7), this protein is Putative cell division cycle ATPase.